The following is a 232-amino-acid chain: Large ribosomal subunit protein uL1 (232 aa).

Belongs to the universal ribosomal protein uL1 family. Part of the 50S ribosomal subunit.

In terms of biological role, binds directly to 23S rRNA. The L1 stalk is quite mobile in the ribosome, and is involved in E site tRNA release. Protein L1 is also a translational repressor protein, it controls the translation of the L11 operon by binding to its mRNA. The polypeptide is Large ribosomal subunit protein uL1 (Chlamydia caviae (strain ATCC VR-813 / DSM 19441 / 03DC25 / GPIC) (Chlamydophila caviae)).